Reading from the N-terminus, the 205-residue chain is Small ribosomal subunit protein uS4 (205 aa).

Residues 20-47 (WGRSKSPLNRGKENPPGQHGQRRKKPSD) are disordered. In terms of domain architecture, S4 RNA-binding spans 94–154 (CRLDAVVYRL…TKSKDMALIL (61 aa)).

The protein belongs to the universal ribosomal protein uS4 family. As to quaternary structure, part of the 30S ribosomal subunit. Contacts protein S5. The interaction surface between S4 and S5 is involved in control of translational fidelity.

Its function is as follows. One of the primary rRNA binding proteins, it binds directly to 16S rRNA where it nucleates assembly of the body of the 30S subunit. In terms of biological role, with S5 and S12 plays an important role in translational accuracy. This Paramagnetospirillum magneticum (strain ATCC 700264 / AMB-1) (Magnetospirillum magneticum) protein is Small ribosomal subunit protein uS4.